The chain runs to 261 residues: Acidic leucine-rich nuclear phosphoprotein 32 family member B (261 aa).

4 LRR repeats span residues 16–40, 43–64, 65–87, and 89–110; these read PAAV…LTAE, NLEF…PKLP, KLKK…AEKL, and NLTH…EPLK. Position 86 is an N6-acetyllysine (Lys-86). In terms of domain architecture, LRRCT spans 123-161; the sequence is CEVTNLNDYRESVFKLLPQLTYLDGYDREDREAPDSDAE. Residues 149–261 are disordered; it reads DREDREAPDS…RETDDEGEDD (113 aa). Residues 157 to 243 show a composition bias toward acidic residues; it reads DSDAEVDGVD…DEDEDEEEEE (87 aa). The residue at position 158 (Ser-158) is a Phosphoserine. Positions 244 to 254 are enriched in basic and acidic residues; the sequence is SGKGEGRKRET. The residue at position 254 (Thr-254) is a Phosphothreonine.

This sequence belongs to the ANP32 family. In terms of assembly, monomer. Interacts with histones H3 and H4. Some glutamate residues are glycylated by TTLL8. This modification occurs exclusively on glutamate residues and results in a glycine chain on the gamma-carboxyl group.

It is found in the nucleus. Multifunctional protein working as a cell cycle progression factor as well as a cell survival factor. Required for the progression from the G1 to the S phase. Anti-apoptotic protein which functions as a caspase-3 inhibitor. Has no phosphatase 2A (PP2A) inhibitor activity. Exhibits histone chaperone properties, stimulating core histones to assemble into a nucleosome. This chain is Acidic leucine-rich nuclear phosphoprotein 32 family member B (ANP32B), found in Ovis aries (Sheep).